Reading from the N-terminus, the 240-residue chain is MKMSGFSIEEKVHEFESKGFLEISNEIFLQEEENHSLLTQAQLDYYNLEDDAYGECRARSYSRYIKYVDSPDYILDNSNDYFQSKEYNYDDGGKVRQFNSINDSFLCNPLIQNIVRFDTEFAFKTNIIDKSKDLIIGLHQVRYKATKERPSFSSPIWLHKDDEPVVFLHLMNLSNTAIGGDNLIANSPREINQFISLKEPLETLVFGQKVFHAVTPLGTECSTEAFRDILLVTFSYKETK.

Fe cation contacts are provided by histidine 159, aspartate 161, and histidine 212.

The protein belongs to the iron/ascorbate-dependent oxidoreductase family. It depends on L-ascorbate as a cofactor. The cofactor is Fe(2+).

It catalyses the reaction L-isoleucine + 2-oxoglutarate + O2 = (4S)-4-hydroxy-L-isoleucine + succinate + CO2. Its function is as follows. Catalyzes the hydroxylation of L-isoleucine to produce (4S)-4-hydroxy-L-isoleucine. Can also catalyze the hydroxylation of L-leucine, L-norvaline, L-norleucine and L-allo-isoleucine, as well as the sulfoxidation of L-methionine, L-ethionine, S-methyl-L-cysteine, S-ethyl-L-cysteine, and S-allyl-L-cysteine. This is L-isoleucine-4-hydroxylase from Bacillus thuringiensis.